The following is a 396-amino-acid chain: Cystathionine beta-lyase (396 aa).

K214 carries the post-translational modification N6-(pyridoxal phosphate)lysine.

The protein belongs to the trans-sulfuration enzymes family. In terms of assembly, homodimer. Pyridoxal 5'-phosphate is required as a cofactor.

It is found in the cytoplasm. It catalyses the reaction L,L-cystathionine + H2O = L-homocysteine + pyruvate + NH4(+). The catalysed reaction is an S-substituted L-cysteine + H2O = a thiol + pyruvate + NH4(+). The protein operates within amino-acid biosynthesis; L-methionine biosynthesis via de novo pathway; L-homocysteine from L-cystathionine: step 1/1. Its function is as follows. Catalyzes the cleavage of cystathionine to homocysteine, pyruvate and ammonia during methionine biosynthesis. Also has cytotoxic activity toward osteogenic, osteosarcoma and tracheal cells, in vitro. The chemical basis for cell toxicity might be the formation and subsequent transfer of sulfane-sulfur to proteins, derived via beta-cystathionase cleavage of L-cystine. The sequence is that of Cystathionine beta-lyase (metC) from Bordetella avium.